We begin with the raw amino-acid sequence, 140 residues long: Nucleoside diphosphate kinase (140 aa).

The ATP site is built by Lys-11, Phe-59, Arg-87, Thr-93, Arg-104, and Asn-114. The Pros-phosphohistidine intermediate role is filled by His-117.

This sequence belongs to the NDK family. In terms of assembly, homotetramer. It depends on Mg(2+) as a cofactor.

It localises to the cytoplasm. It carries out the reaction a 2'-deoxyribonucleoside 5'-diphosphate + ATP = a 2'-deoxyribonucleoside 5'-triphosphate + ADP. The enzyme catalyses a ribonucleoside 5'-diphosphate + ATP = a ribonucleoside 5'-triphosphate + ADP. Major role in the synthesis of nucleoside triphosphates other than ATP. The ATP gamma phosphate is transferred to the NDP beta phosphate via a ping-pong mechanism, using a phosphorylated active-site intermediate. The chain is Nucleoside diphosphate kinase from Rickettsia conorii (strain ATCC VR-613 / Malish 7).